Here is a 121-residue protein sequence, read N- to C-terminus: Large ribosomal subunit protein bL12 (121 aa).

This sequence belongs to the bacterial ribosomal protein bL12 family. As to quaternary structure, homodimer. Part of the ribosomal stalk of the 50S ribosomal subunit. Forms a multimeric L10(L12)X complex, where L10 forms an elongated spine to which 2 to 4 L12 dimers bind in a sequential fashion. Binds GTP-bound translation factors.

In terms of biological role, forms part of the ribosomal stalk which helps the ribosome interact with GTP-bound translation factors. Is thus essential for accurate translation. The sequence is that of Large ribosomal subunit protein bL12 from Clostridium perfringens (strain ATCC 13124 / DSM 756 / JCM 1290 / NCIMB 6125 / NCTC 8237 / Type A).